A 203-amino-acid polypeptide reads, in one-letter code: Endo-type membrane-bound lytic murein transglycosylase A (203 aa).

Positions 1-15 are cleaved as a signal peptide; the sequence is MKLRWFAFLIVLLAG. Cysteine 16 carries the N-palmitoyl cysteine lipid modification. Cysteine 16 carries S-diacylglycerol cysteine lipidation.

It belongs to the transglycosylase Slt family.

It localises to the cell outer membrane. The enzyme catalyses Endolytic cleavage of the (1-&gt;4)-beta-glycosidic linkage between N-acetylmuramic acid (MurNAc) and N-acetylglucosamine (GlcNAc) residues in peptidoglycan with concomitant formation of a 1,6-anhydrobond in the MurNAc residue.. Murein-degrading enzyme. May play a role in recycling of muropeptides during cell elongation and/or cell division. Preferentially cleaves at a distance of more than two disaccharide units from the ends of the glycan chain. The chain is Endo-type membrane-bound lytic murein transglycosylase A from Shigella boydii serotype 4 (strain Sb227).